The following is a 124-amino-acid chain: Small ribosomal subunit protein uS12 (124 aa).

The disordered stretch occupies residues 9–28 (RTERQTLSRKTKSPALRSCP). A 3-methylthioaspartic acid modification is found at Asp-89. A disordered region spans residues 104-124 (TAGVKDRRQSRSKYGAKAPKE).

The protein belongs to the universal ribosomal protein uS12 family. In terms of assembly, part of the 30S ribosomal subunit. Contacts proteins S8 and S17. May interact with IF1 in the 30S initiation complex.

Its function is as follows. With S4 and S5 plays an important role in translational accuracy. Interacts with and stabilizes bases of the 16S rRNA that are involved in tRNA selection in the A site and with the mRNA backbone. Located at the interface of the 30S and 50S subunits, it traverses the body of the 30S subunit contacting proteins on the other side and probably holding the rRNA structure together. The combined cluster of proteins S8, S12 and S17 appears to hold together the shoulder and platform of the 30S subunit. The chain is Small ribosomal subunit protein uS12 from Synechococcus sp. (strain RCC307).